We begin with the raw amino-acid sequence, 381 residues long: 3-dehydroquinate synthase (381 aa).

NAD(+) is bound by residues 81-86, 115-119, 139-140, Lys-152, and Lys-161; these read EGESSK, GVIGD, and TS. Zn(2+) contacts are provided by Glu-194, His-256, and His-274.

It belongs to the sugar phosphate cyclases superfamily. Dehydroquinate synthase family. Co(2+) serves as cofactor. Zn(2+) is required as a cofactor. Requires NAD(+) as cofactor.

The protein localises to the cytoplasm. It carries out the reaction 7-phospho-2-dehydro-3-deoxy-D-arabino-heptonate = 3-dehydroquinate + phosphate. It participates in metabolic intermediate biosynthesis; chorismate biosynthesis; chorismate from D-erythrose 4-phosphate and phosphoenolpyruvate: step 2/7. Its function is as follows. Catalyzes the conversion of 3-deoxy-D-arabino-heptulosonate 7-phosphate (DAHP) to dehydroquinate (DHQ). The polypeptide is 3-dehydroquinate synthase (Rhodopseudomonas palustris (strain ATCC BAA-98 / CGA009)).